The chain runs to 628 residues: MSRSGDRTSTFDPSHSDNLLHGLNLLWRKQLFCDVTLTAQGQQFHCHKAVLASCSQYFRSLFSSHPPLGGGVGGQDGLGAPKDQQQPPQQQPSQQQQPPPQEEPGTPSSSPDDKLLTSPRAINNLVLQGCSSIGLRLVLEYLYTANVTLSLDTVEEVLSVSKILHIPQVTKLCVQFLNDQISVQNYKQVCKIAALHGLEETKKLANKYLVEDVLLLNFEEMRALLDSLPPPVESELALFQMSVLWLEHDRETRMQYAPDLMKRLRFALIPAPELVERVQSVDFMRTDPVCQKLLLDAMNYHLMPFRQHCRQSLASRIRSNKKMLLLVGGLPPGPDRLPSNLVQYYDDEKKTWKILTIMPYNSAHHCVVEVENFLFVLGGEDQWNPNGKHSTNFVSRYDPRFNSWIQLPPMQERRASFYACRLDKHLYVIGGRNETGYLSSVECYNLETNEWRYVSSLPQPLAAHAGAVHNGKIYISGGVHNGEYVPWLYCYDPVMDVWARKQDMNTKRAIHTLAVMNDRLYAIGGNHLKGFSHLDVMLVECYDPKGDQWNILQTPILEGRSGPGCAVLDDSIYLVGGYSWSMGAYKSSTICYCPEKGTWTELEGDVAEPLAGPACVTVILPSCVPYNK.

The 119-residue stretch at 33–151 (CDVTLTAQGQ…LYTANVTLSL (119 aa)) folds into the BTB domain. The interval 69-115 (GGGVGGQDGLGAPKDQQQPPQQQPSQQQQPPPQEEPGTPSSSPDDKL) is disordered. A compositionally biased stretch (low complexity) spans 84–96 (QQQPPQQQPSQQQ). The BACK domain maps to 210–279 (VEDVLLLNFE…PAPELVERVQ (70 aa)). Kelch repeat units follow at residues 323–372 (MLLL…EVEN), 373–424 (FLFV…RLDK), 425–471 (HLYV…VHNG), 473–518 (IYIS…VMND), 520–570 (LYAI…VLDD), and 572–620 (IYLV…TVIL).

In terms of assembly, interacts with TOR1A, preferentially with the ATP-free form.

It is found in the cytoplasm. The protein localises to the cytosol. It localises to the endoplasmic reticulum membrane. The polypeptide is Kelch-like protein 14 (KLHL14) (Homo sapiens (Human)).